The chain runs to 395 residues: D-alanine--D-alanine ligase (395 aa).

Residues 172–391 (KVVLGAAGIP…YTELITRLIE (220 aa)) enclose the ATP-grasp domain. 204 to 266 (DAGLTYPLFI…EQGIDGREIE (63 aa)) provides a ligand contact to ATP. Mg(2+) is bound by residues D345, E358, and N360.

The protein belongs to the D-alanine--D-alanine ligase family. Mg(2+) serves as cofactor. It depends on Mn(2+) as a cofactor.

Its subcellular location is the cytoplasm. The enzyme catalyses 2 D-alanine + ATP = D-alanyl-D-alanine + ADP + phosphate + H(+). Its pathway is cell wall biogenesis; peptidoglycan biosynthesis. In terms of biological role, cell wall formation. The protein is D-alanine--D-alanine ligase of Bifidobacterium longum subsp. infantis (strain ATCC 15697 / DSM 20088 / JCM 1222 / NCTC 11817 / S12).